The following is a 490-amino-acid chain: Membrane-bound lytic murein transglycosylase F (490 aa).

The N-terminal stretch at 1–32 (MFALTAYRLRCAAWLLATGIFLLLAGCSEAKA) is a signal peptide. The tract at residues 33-269 (PTALERVQKE…RLKDRYYGHV (237 aa)) is non-LT domain. Residues 270-490 (DVLGYVGAYT…PDDDEGDGKL (221 aa)) are LT domain. Residue Glu316 is part of the active site. A disordered region spans residues 467 to 490 (AESGLHLPGVNKTRPDDDEGDGKL).

This sequence in the N-terminal section; belongs to the bacterial solute-binding protein 3 family. It in the C-terminal section; belongs to the transglycosylase Slt family.

It localises to the cell outer membrane. It carries out the reaction Exolytic cleavage of the (1-&gt;4)-beta-glycosidic linkage between N-acetylmuramic acid (MurNAc) and N-acetylglucosamine (GlcNAc) residues in peptidoglycan, from either the reducing or the non-reducing ends of the peptidoglycan chains, with concomitant formation of a 1,6-anhydrobond in the MurNAc residue.. Functionally, murein-degrading enzyme that degrades murein glycan strands and insoluble, high-molecular weight murein sacculi, with the concomitant formation of a 1,6-anhydromuramoyl product. Lytic transglycosylases (LTs) play an integral role in the metabolism of the peptidoglycan (PG) sacculus. Their lytic action creates space within the PG sacculus to allow for its expansion as well as for the insertion of various structures such as secretion systems and flagella. This Pseudomonas paraeruginosa (strain DSM 24068 / PA7) (Pseudomonas aeruginosa (strain PA7)) protein is Membrane-bound lytic murein transglycosylase F.